We begin with the raw amino-acid sequence, 264 residues long: Thymidylate synthase (264 aa).

Arg-21 contributes to the dUMP binding site. His-51 provides a ligand contact to (6R)-5,10-methylene-5,6,7,8-tetrahydrofolate. 126 to 127 (RR) contacts dUMP. Cys-146 (nucleophile) is an active-site residue. Residues 166–169 (RSAD), Asn-177, and 207–209 (HLY) each bind dUMP. Asp-169 is a (6R)-5,10-methylene-5,6,7,8-tetrahydrofolate binding site. Ser-263 is a (6R)-5,10-methylene-5,6,7,8-tetrahydrofolate binding site.

This sequence belongs to the thymidylate synthase family. Bacterial-type ThyA subfamily. In terms of assembly, homodimer.

It is found in the cytoplasm. It catalyses the reaction dUMP + (6R)-5,10-methylene-5,6,7,8-tetrahydrofolate = 7,8-dihydrofolate + dTMP. The protein operates within pyrimidine metabolism; dTTP biosynthesis. Its function is as follows. Catalyzes the reductive methylation of 2'-deoxyuridine-5'-monophosphate (dUMP) to 2'-deoxythymidine-5'-monophosphate (dTMP) while utilizing 5,10-methylenetetrahydrofolate (mTHF) as the methyl donor and reductant in the reaction, yielding dihydrofolate (DHF) as a by-product. This enzymatic reaction provides an intracellular de novo source of dTMP, an essential precursor for DNA biosynthesis. The protein is Thymidylate synthase of Neisseria meningitidis serogroup C / serotype 2a (strain ATCC 700532 / DSM 15464 / FAM18).